Here is an 88-residue protein sequence, read N- to C-terminus: Protein GOLVEN 10 (88 aa).

Positions 1–22 (MSSIHVASMILLLFLFLHHSDS) are cleaved as a signal peptide. The propeptide occupies 23 to 75 (RHLDNVHITASRFSLVKDQNVVSSSTSKEPVKVSRFVPGPLKHHHRRPPLLFA). Positions 44–88 (VSSSTSKEPVKVSRFVPGPLKHHHRRPPLLFADYPKPSTRPPRHN) are disordered. Position 77 is a sulfotyrosine (Tyr77). The residue at position 85 (Pro85) is a Hydroxyproline.

It belongs to the RGF family. As to quaternary structure, binds to LRR receptor-like serine/threonine-protein kinases RGI1, RGI2 and RGI3 to trigger their dimerization with SERK proteins and subsequent signaling. As to expression, expressed in roots, shoots, leaves and flowers.

The protein resides in the secreted. The protein localises to the endoplasmic reticulum. Functionally, signaling peptide (root growth factor) that maintains the postembryonic root stem cell niche. Regulates the pattern of root growth and lateral root development by modulating the length and the number of cortical cells in the root apical meristem (RAM), and the anticlinal asymmetric cell divisions in lateral root initiation cells. In Arabidopsis thaliana (Mouse-ear cress), this protein is Protein GOLVEN 10.